A 209-amino-acid chain; its full sequence is Small ribosomal subunit protein uS3 (209 aa).

Positions 38–107 (IRKFIKNKYY…RVVINIEEIK (70 aa)) constitute a KH type-2 domain.

It belongs to the universal ribosomal protein uS3 family. In terms of assembly, part of the 30S ribosomal subunit. Forms a tight complex with proteins S10 and S14.

In terms of biological role, binds the lower part of the 30S subunit head. Binds mRNA in the 70S ribosome, positioning it for translation. This is Small ribosomal subunit protein uS3 from Thermotoga sp. (strain RQ2).